We begin with the raw amino-acid sequence, 1408 residues long: Protein patched homolog 1 (1408 aa).

The interval 1-20 (MLTLLEPPGAKRSPTVGNYN) is disordered. Over 1-136 (MLTLLEPPGA…GNTVHRNAWS (136 aa)) the chain is Cytoplasmic. A helical transmembrane segment spans residues 137–157 (IILAVSMIFAVCCYGLQYVHI). Topologically, residues 158 to 649 (ETDIVKLWVA…STSIADMLEE (492 aa)) are extracellular. Residues 455–479 (STAPIPTTTTLSPEEARAAEEKEKK) form a disordered region. The span at 468–479 (EEARAAEEKEKK) shows a compositional bias: basic and acidic residues. Asn599 carries an N-linked (GlcNAc...) asparagine glycan. Residues 650 to 670 (FCQFNYTIILAGYALMLAYAI) form a helical membrane-spanning segment. The SSD domain maps to 654-816 (NYTIILAGYA…LTIYPAIISI (163 aa)). Residues 671–686 (VTQARFDNCLPATESS) are Cytoplasmic-facing. Residues 687-707 (MGLALAGVLVVTFASVAGLGL) form a helical membrane-spanning segment. The Extracellular segment spans residues 708–709 (AT). Residues 710–730 (WFGIEFNAATTQIVPFLTLGI) traverse the membrane as a helical segment. Over 731–765 (GVDNMFMLLHNYRDVVKLAGGHAEMAILMRETGMS) the chain is Cytoplasmic. Residues 766-786 (ILCTSINNILSFLTGTLLPIP) form a helical membrane-spanning segment. Topologically, residues 787–795 (ALRSFCAQS) are extracellular. The chain crosses the membrane as a helical span at residues 796–816 (SILLTFNFIAILTIYPAIISI). Topologically, residues 817–901 (DLRRKKAQRR…YYYIPFISKP (85 aa)) are cytoplasmic. Residues 902-922 (ASKVAIIVGCCALLGASFIGM) traverse the membrane as a helical segment. The Extracellular portion of the chain corresponds to 923–1175 (RQSTLGLELG…QGIAFTFWEQ (253 aa)). Asn1026 and Asn1036 each carry an N-linked (GlcNAc...) asparagine glycan. Residues 1176 to 1196 (YLFLTGNLMQAISIITISVFC) traverse the membrane as a helical segment. At 1197 to 1217 (VISVLLFNPWAALMVVCILGI) the chain is on the cytoplasmic side. Transmembrane regions (helical) follow at residues 1218–1238 (MTCELAGFMGLVGIKLNPVSA) and 1239–1259 (VTLITAVGIGVEFTVHVVVSF). Topologically, residues 1260-1276 (LTALGTRSQRTSSAVDR) are extracellular. A helical membrane pass occupies residues 1277 to 1297 (VFVPVIHGSFSTLLGILMLGF). The Cytoplasmic segment spans residues 1298–1305 (SEFEFVVK). Residues 1306-1326 (YFFIVMTALICIGIINGLILL) traverse the membrane as a helical segment. Over 1327–1408 (PVLLSWFGPR…GNNTRRLPAV (82 aa)) the chain is Extracellular. The segment at 1342 to 1408 (TGGKTTLTLP…GNNTRRLPAV (67 aa)) is disordered. Over residues 1387–1408 (TTRTSGGNRGTVGNNTRRLPAV) the composition is skewed to low complexity.

Belongs to the patched family. As to expression, germ line and its progenitors.

The protein resides in the membrane. Required but not essential for cytokinesis of mitotically proliferating germ cells. The polypeptide is Protein patched homolog 1 (ptc-1) (Caenorhabditis elegans).